Reading from the N-terminus, the 238-residue chain is tRNA (guanine-N(7)-)-methyltransferase (238 aa).

The S-adenosyl-L-methionine site is built by E68, E93, D120, and D143. Residue D143 is part of the active site. Substrate-binding positions include K147, D179, and 216–219 (TKFE).

It belongs to the class I-like SAM-binding methyltransferase superfamily. TrmB family.

The enzyme catalyses guanosine(46) in tRNA + S-adenosyl-L-methionine = N(7)-methylguanosine(46) in tRNA + S-adenosyl-L-homocysteine. Its pathway is tRNA modification; N(7)-methylguanine-tRNA biosynthesis. Its function is as follows. Catalyzes the formation of N(7)-methylguanine at position 46 (m7G46) in tRNA. The sequence is that of tRNA (guanine-N(7)-)-methyltransferase from Marinobacter nauticus (strain ATCC 700491 / DSM 11845 / VT8) (Marinobacter aquaeolei).